A 341-amino-acid polypeptide reads, in one-letter code: Anthranilate phosphoribosyltransferase (341 aa).

5-phospho-alpha-D-ribose 1-diphosphate is bound by residues Gly80, 83 to 84 (GD), Thr88, 90 to 93 (NIST), 108 to 116 (KHGNRSVSS), and Ser120. Gly80 is an anthranilate binding site. Ser92 provides a ligand contact to Mg(2+). Asn111 serves as a coordination point for anthranilate. Arg166 lines the anthranilate pocket. Positions 225 and 226 each coordinate Mg(2+).

Belongs to the anthranilate phosphoribosyltransferase family. In terms of assembly, homodimer. It depends on Mg(2+) as a cofactor.

The enzyme catalyses N-(5-phospho-beta-D-ribosyl)anthranilate + diphosphate = 5-phospho-alpha-D-ribose 1-diphosphate + anthranilate. Its pathway is amino-acid biosynthesis; L-tryptophan biosynthesis; L-tryptophan from chorismate: step 2/5. Catalyzes the transfer of the phosphoribosyl group of 5-phosphorylribose-1-pyrophosphate (PRPP) to anthranilate to yield N-(5'-phosphoribosyl)-anthranilate (PRA). The chain is Anthranilate phosphoribosyltransferase from Shouchella clausii (strain KSM-K16) (Alkalihalobacillus clausii).